We begin with the raw amino-acid sequence, 214 residues long: Ras-like protein 2 (214 aa).

GTP is bound by residues 19-24 (GVGKSC), 35-41 (VDEYDPT), 65-66 (AG), 122-125 (NKCD), and 152-154 (SAK). Positions 38–46 (YDPTIEDSY) match the Effector region motif. The tract at residues 178–197 (QGYSTGSGGSNAGGPSNKME) is disordered. Residue cysteine 211 is modified to Cysteine methyl ester. Cysteine 211 carries S-farnesyl cysteine lipidation. Residues 212-214 (VLM) constitute a propeptide, removed in mature form.

Belongs to the small GTPase superfamily. Ras family. Interacts with farnesyltransferase beta subunit RAM1.

It localises to the cell membrane. Alternates between an inactive form bound to GDP and an active form bound to GTP. Activated by a guanine nucleotide-exchange factor (GEF) and inactivated by a GTPase-activating protein (GAP). Modulates the activity of the adenylate cyclase catalytic subunit and therefore affects the biosynthesis of cyclic-AMP. Plays a role in both surface attachment and surface recognition of appressoria, a highly specialized infection structure for plant penetration. Regulates appressorium formation by coordinated regulation of cAMP signaling and Pmk1 MAPK pathways. In Pyricularia oryzae (strain 70-15 / ATCC MYA-4617 / FGSC 8958) (Rice blast fungus), this protein is Ras-like protein 2.